A 222-amino-acid polypeptide reads, in one-letter code: Ras-related protein Rab-41 (222 aa).

Ser41, Val42, Gly43, Lys44, Thr45, Ser46, and Thr63 together coordinate GTP. Position 45 (Thr45) interacts with Mg(2+). The segment at 58 to 66 (CACQATVGI) is switch-I. Residues Thr63 and Asp86 each contribute to the Mg(2+) site. The GTP site is built by Gly89, Asn144, Lys145, Asp147, Ser174, Ala175, and Lys176. The switch-II stretch occupies residues 89–105 (GQERFHSLIPSYIRDST). Cys222 is lipidated: S-geranylgeranyl cysteine.

Belongs to the small GTPase superfamily. Rab family. Mg(2+) is required as a cofactor. Widely expressed in brain, testis, lung, heart, ovary, colon, kidney, uterus and spleen but not in liver.

The protein resides in the cytoplasm. The catalysed reaction is GTP + H2O = GDP + phosphate + H(+). Its activity is regulated as follows. Regulated by guanine nucleotide exchange factors (GEFs) which promote the exchange of bound GDP for free GTP. Regulated by GTPase activating proteins (GAPs) which increase the GTP hydrolysis activity. Inhibited by GDP dissociation inhibitors (GDIs). Its function is as follows. The small GTPases Rab are key regulators of intracellular membrane trafficking, from the formation of transport vesicles to their fusion with membranes. Rabs cycle between an inactive GDP-bound form and an active GTP-bound form that is able to recruit to membranes different sets of downstream effectors directly responsible for vesicle formation, movement, tethering and fusion. RAB41 is required for normal Golgi ribbon organization and ER-to-Golgi trafficking. The polypeptide is Ras-related protein Rab-41 (Homo sapiens (Human)).